Reading from the N-terminus, the 260-residue chain is UPF0294 protein YE0917 (260 aa).

It belongs to the UPF0294 family.

It localises to the cytoplasm. The chain is UPF0294 protein YE0917 from Yersinia enterocolitica serotype O:8 / biotype 1B (strain NCTC 13174 / 8081).